The chain runs to 427 residues: Enolase (427 aa).

Gln163 provides a ligand contact to (2R)-2-phosphoglycerate. Glu205 acts as the Proton donor in catalysis. Positions 242, 285, and 312 each coordinate Mg(2+). Residues Lys337, Arg366, Ser367, and Lys388 each contribute to the (2R)-2-phosphoglycerate site. The active-site Proton acceptor is Lys337.

The protein belongs to the enolase family. Mg(2+) is required as a cofactor.

It localises to the cytoplasm. The protein localises to the secreted. It is found in the cell surface. It carries out the reaction (2R)-2-phosphoglycerate = phosphoenolpyruvate + H2O. The protein operates within carbohydrate degradation; glycolysis; pyruvate from D-glyceraldehyde 3-phosphate: step 4/5. Its function is as follows. Catalyzes the reversible conversion of 2-phosphoglycerate (2-PG) into phosphoenolpyruvate (PEP). It is essential for the degradation of carbohydrates via glycolysis. The chain is Enolase from Thiobacillus denitrificans (strain ATCC 25259 / T1).